The following is a 595-amino-acid chain: Aspartate--tRNA(Asp/Asn) ligase (595 aa).

Glu175 contacts L-aspartate. The aspartate stretch occupies residues 199 to 202; the sequence is QQYK. The L-aspartate site is built by Arg221 and His454. 221-223 contributes to the ATP binding site; sequence RDE. Position 488 (Glu488) interacts with ATP. Arg495 is an L-aspartate binding site. Residue 540 to 543 participates in ATP binding; that stretch reads GIDR.

The protein belongs to the class-II aminoacyl-tRNA synthetase family. Type 1 subfamily. As to quaternary structure, homodimer.

It localises to the cytoplasm. The enzyme catalyses tRNA(Asx) + L-aspartate + ATP = L-aspartyl-tRNA(Asx) + AMP + diphosphate. In terms of biological role, aspartyl-tRNA synthetase with relaxed tRNA specificity since it is able to aspartylate not only its cognate tRNA(Asp) but also tRNA(Asn). Reaction proceeds in two steps: L-aspartate is first activated by ATP to form Asp-AMP and then transferred to the acceptor end of tRNA(Asp/Asn). This chain is Aspartate--tRNA(Asp/Asn) ligase, found in Agrobacterium fabrum (strain C58 / ATCC 33970) (Agrobacterium tumefaciens (strain C58)).